The primary structure comprises 169 residues: uncharacterized protein (169 aa).

A run of 2 helical transmembrane segments spans residues 62–84 (RWGF…LLGL) and 94–116 (ALML…YWWF).

It localises to the cell membrane. This is an uncharacterized protein from Archaeoglobus fulgidus (strain ATCC 49558 / DSM 4304 / JCM 9628 / NBRC 100126 / VC-16).